The following is a 348-amino-acid chain: NADH-ubiquinone oxidoreductase chain 2 (348 aa).

A run of 11 helical transmembrane segments spans residues Pro-3–Ser-23, His-25–Ala-45, Phe-60–Ala-80, Met-99–Leu-119, Leu-122–Ile-142, Asn-150–Leu-170, Ile-178–Tyr-196, Leu-200–Leu-219, Leu-246–Ile-266, Asp-274–Leu-294, and Leu-328–Phe-348.

Belongs to the complex I subunit 2 family.

The protein localises to the mitochondrion inner membrane. It catalyses the reaction a ubiquinone + NADH + 5 H(+)(in) = a ubiquinol + NAD(+) + 4 H(+)(out). In terms of biological role, core subunit of the mitochondrial membrane respiratory chain NADH dehydrogenase (Complex I) that is believed to belong to the minimal assembly required for catalysis. Complex I functions in the transfer of electrons from NADH to the respiratory chain. The immediate electron acceptor for the enzyme is believed to be ubiquinone. This is NADH-ubiquinone oxidoreductase chain 2 (MT-ND2) from Formosania lacustris (Oriental stream loach).